The primary structure comprises 217 residues: Adenylate kinase (217 aa).

An ATP-binding site is contributed by 10-15 (GAGKGT). Residues 30–59 (STGDMLRAAVKAGTPLGVEAKKVMDAGGLV) are NMP. AMP contacts are provided by residues T31, R36, 57 to 59 (GLV), 85 to 88 (GFPR), and Q92. The interval 122-159 (GRRAHLASGRTYHVKYNPPKVAGKDDLTGEDLVQRDDD) is LID. Residues R123 and 132 to 133 (TY) each bind ATP. 2 residues coordinate AMP: R156 and R167. G203 serves as a coordination point for ATP.

This sequence belongs to the adenylate kinase family. As to quaternary structure, monomer.

The protein localises to the cytoplasm. The enzyme catalyses AMP + ATP = 2 ADP. Its pathway is purine metabolism; AMP biosynthesis via salvage pathway; AMP from ADP: step 1/1. Catalyzes the reversible transfer of the terminal phosphate group between ATP and AMP. Plays an important role in cellular energy homeostasis and in adenine nucleotide metabolism. The sequence is that of Adenylate kinase from Aromatoleum aromaticum (strain DSM 19018 / LMG 30748 / EbN1) (Azoarcus sp. (strain EbN1)).